The following is a 72-amino-acid chain: UPF0154 protein lhv_1362 (72 aa).

Residues Leu3–Tyr23 form a helical membrane-spanning segment.

This sequence belongs to the UPF0154 family.

The protein resides in the cell membrane. In Lactobacillus helveticus (strain DPC 4571), this protein is UPF0154 protein lhv_1362.